The chain runs to 471 residues: Siroheme synthase 1 (471 aa).

The segment at 1–203 (MEYLPLFAQL…GDTRAAEAVL (203 aa)) is precorrin-2 dehydrogenase /sirohydrochlorin ferrochelatase. NAD(+)-binding positions include 22–23 (EV) and 43–44 (KK). Phosphoserine is present on serine 128. A uroporphyrinogen-III C-methyltransferase region spans residues 215–471 (GEIILVGAGP…NLRSSVVNLA (257 aa)). Proline 224 is a binding site for S-adenosyl-L-methionine. Aspartate 247 functions as the Proton acceptor in the catalytic mechanism. Lysine 269 acts as the Proton donor in catalysis. Residues 300–302 (GGD), isoleucine 305, 330–331 (TA), methionine 382, and glycine 411 each bind S-adenosyl-L-methionine.

It in the N-terminal section; belongs to the precorrin-2 dehydrogenase / sirohydrochlorin ferrochelatase family. The protein in the C-terminal section; belongs to the precorrin methyltransferase family.

It carries out the reaction uroporphyrinogen III + 2 S-adenosyl-L-methionine = precorrin-2 + 2 S-adenosyl-L-homocysteine + H(+). The catalysed reaction is precorrin-2 + NAD(+) = sirohydrochlorin + NADH + 2 H(+). It catalyses the reaction siroheme + 2 H(+) = sirohydrochlorin + Fe(2+). The protein operates within cofactor biosynthesis; adenosylcobalamin biosynthesis; precorrin-2 from uroporphyrinogen III: step 1/1. Its pathway is cofactor biosynthesis; adenosylcobalamin biosynthesis; sirohydrochlorin from precorrin-2: step 1/1. It participates in porphyrin-containing compound metabolism; siroheme biosynthesis; precorrin-2 from uroporphyrinogen III: step 1/1. It functions in the pathway porphyrin-containing compound metabolism; siroheme biosynthesis; siroheme from sirohydrochlorin: step 1/1. The protein operates within porphyrin-containing compound metabolism; siroheme biosynthesis; sirohydrochlorin from precorrin-2: step 1/1. Multifunctional enzyme that catalyzes the SAM-dependent methylations of uroporphyrinogen III at position C-2 and C-7 to form precorrin-2 via precorrin-1. Then it catalyzes the NAD-dependent ring dehydrogenation of precorrin-2 to yield sirohydrochlorin. Finally, it catalyzes the ferrochelation of sirohydrochlorin to yield siroheme. The polypeptide is Siroheme synthase 1 (Cronobacter sakazakii (strain ATCC BAA-894) (Enterobacter sakazakii)).